Reading from the N-terminus, the 172-residue chain is Spore coat protein X (172 aa).

It localises to the spore coat. The polypeptide is Spore coat protein X (cotX) (Bacillus subtilis (strain 168)).